Here is a 158-residue protein sequence, read N- to C-terminus: Ribonuclease H (158 aa).

The 142-residue stretch at 5–146 (MRKQIEIFTD…CDQLAKQGAE (142 aa)) folds into the RNase H type-1 domain. Residues D14, E52, D74, and D138 each contribute to the Mg(2+) site.

Belongs to the RNase H family. Monomer. Requires Mg(2+) as cofactor.

Its subcellular location is the cytoplasm. It carries out the reaction Endonucleolytic cleavage to 5'-phosphomonoester.. Functionally, endonuclease that specifically degrades the RNA of RNA-DNA hybrids. This is Ribonuclease H from Mannheimia succiniciproducens (strain KCTC 0769BP / MBEL55E).